Consider the following 67-residue polypeptide: Coiled-coil domain-containing protein 179 (67 aa).

2 disordered regions span residues 1–32 (MCLR…RQSV) and 47–67 (RKLG…ILWT). Residues 27 to 53 (STRQSVEKRINYMQNLQKEKRKLGKRF) adopt a coiled-coil conformation.

In Mus musculus (Mouse), this protein is Coiled-coil domain-containing protein 179 (Ccdc179).